The following is a 74-amino-acid chain: Neuropeptide-like protein 33 (74 aa).

Residues 1–21 (MISTSLLLVVLLFAILAIVDA) form the signal peptide. Tyr72 is modified (tyrosine amide).

This sequence belongs to the YARP (YGGW-amide related peptide) family. In terms of tissue distribution, expressed in hypoderm.

The protein resides in the secreted. Functionally, may have antifungic activity against D.coniospora. This chain is Neuropeptide-like protein 33 (nlp-33), found in Caenorhabditis elegans.